The chain runs to 399 residues: Centrosomal protein 43 (399 aa).

Positions aspartate 70–glutamine 102 constitute a LisH domain. 2 disordered regions span residues proline 142–serine 216 and aspartate 236–serine 311. Serine 152 and serine 160 each carry phosphoserine. Residues glycine 163–serine 172 show a composition bias toward polar residues. Threonine 170 bears the Phosphothreonine mark. Residues proline 175–isoleucine 186 show a composition bias toward basic residues. Residues serine 197 to serine 216 show a composition bias toward low complexity. Serine 202 is subject to Phosphoserine. Acidic residues predominate over residues aspartate 246 to phenylalanine 256. Residues proline 259–lysine 275 are compositionally biased toward basic and acidic residues. The span at arginine 290–leucine 302 shows a compositional bias: low complexity. Phosphoserine occurs at positions 301 and 326. Residues glycine 328–serine 354 are disordered. Residue tyrosine 337 is modified to Phosphotyrosine.

The protein belongs to the CEP43 family. Homodimer. Part of a ternary complex that contains CEP350, CEP43 and MAPRE1. Interacts directly with CEP350 and MAPRE1. Interacts with CEP19. Interacts (via N-terminus) with CEP350 (via C-terminus).

It is found in the cytoplasm. It localises to the cytoskeleton. The protein resides in the microtubule organizing center. Its subcellular location is the centrosome. The protein localises to the centriole. It is found in the cilium basal body. Its function is as follows. Required for anchoring microtubules to the centrosomes. Required for ciliation. This is Centrosomal protein 43 from Mus musculus (Mouse).